Consider the following 207-residue polypeptide: Zinc finger protein 487 (207 aa).

A KRAB domain is found at 1–43 (MLENYSLLLSVGYCITKPEVVCKLEHGQVLWILEEESPSQSHL). A C2H2-type; atypical zinc finger spans residues 177–202 (KQCFEYNQCGKAFHEEAACSTHKRVC).

The protein belongs to the krueppel C2H2-type zinc-finger protein family.

Its subcellular location is the nucleus. Functionally, may be involved in transcriptional regulation. This chain is Zinc finger protein 487 (ZNF487), found in Homo sapiens (Human).